The following is an 862-amino-acid chain: Probable inorganic carbon transporter subunit DabA (862 aa).

Positions 365, 367, 540, and 555 each coordinate Zn(2+).

It belongs to the inorganic carbon transporter (TC 9.A.2) DabA family. In terms of assembly, forms a complex with DabB. It depends on Zn(2+) as a cofactor.

The protein localises to the cell inner membrane. Part of an energy-coupled inorganic carbon pump. This Vibrio cholerae serotype O1 (strain ATCC 39315 / El Tor Inaba N16961) protein is Probable inorganic carbon transporter subunit DabA.